The primary structure comprises 283 residues: Pantothenate synthetase (283 aa).

Methionine 30–histidine 37 provides a ligand contact to ATP. Histidine 37 acts as the Proton donor in catalysis. Glutamine 61 serves as a coordination point for (R)-pantoate. Beta-alanine is bound at residue glutamine 61. Glycine 149–aspartate 152 provides a ligand contact to ATP. A (R)-pantoate-binding site is contributed by glutamine 155. Residues isoleucine 178 and methionine 186 to arginine 189 each bind ATP.

This sequence belongs to the pantothenate synthetase family. Homodimer.

It localises to the cytoplasm. The enzyme catalyses (R)-pantoate + beta-alanine + ATP = (R)-pantothenate + AMP + diphosphate + H(+). It functions in the pathway cofactor biosynthesis; (R)-pantothenate biosynthesis; (R)-pantothenate from (R)-pantoate and beta-alanine: step 1/1. Its function is as follows. Catalyzes the condensation of pantoate with beta-alanine in an ATP-dependent reaction via a pantoyl-adenylate intermediate. The sequence is that of Pantothenate synthetase from Shewanella pealeana (strain ATCC 700345 / ANG-SQ1).